The following is a 575-amino-acid chain: Transport inhibitor response 1-like protein Os04g0395600 (575 aa).

In terms of domain architecture, F-box spans 1 to 45 (MTYFPEEVVEHIFSFLPAQRDRNTVSLVCKVWYEIERLSRRGVFV). Lysine 69 contacts 1D-myo-inositol hexakisphosphate. An interaction with auxin-responsive proteins region spans residues 76-77 (DF). 1D-myo-inositol hexakisphosphate contacts are provided by residues 108-109 (KR) and arginine 340. The interval 343 to 348 (PSDFYV) is interaction with auxin-responsive proteins. 1D-myo-inositol hexakisphosphate is bound at residue 396 to 398 (RFR). The interaction with auxin-responsive proteins stretch occupies residues 400–404 (CILEP). Arginine 431 contacts 1D-myo-inositol hexakisphosphate. Positions 459–460 (AF) are interaction with auxin-responsive proteins. 1D-myo-inositol hexakisphosphate contacts are provided by residues 479–480 (RK) and arginine 504.

As to quaternary structure, part of a SCF (SKP1-cullin-F-box) protein ligase complex. May interact with auxin and auxin-responsive proteins.

The protein resides in the nucleus. Its pathway is protein modification; protein ubiquitination. The polypeptide is Transport inhibitor response 1-like protein Os04g0395600 (Oryza sativa subsp. japonica (Rice)).